Reading from the N-terminus, the 549-residue chain is Beta-mannosyltransferase 3 (549 aa).

Over 1-37 (MFESDLSFYSALLILCCPISIVFFKKFPIKGYTGANK) the chain is Cytoplasmic. Residues 38–58 (VSLFLQCLIAILNLNILYSFI) traverse the membrane as a helical segment. At 59 to 549 (NSLTITLGHD…DTMGWDKLSR (491 aa)) the chain is on the extracellular side.

This sequence belongs to the BMT family.

It localises to the membrane. Functionally, beta-mannosyltransferase involved in cell wall biosynthesis. Required for addition of the second beta-mannose residue to acid-stable fraction of cell wall phosphopeptidomannan, and in elongation of beta-mannose chains on the phosphopeptidomannan acid-labile fraction. The polypeptide is Beta-mannosyltransferase 3 (BMT3) (Candida albicans (strain SC5314 / ATCC MYA-2876) (Yeast)).